The following is a 353-amino-acid chain: Photosystem II D2 protein (353 aa).

Threonine 2 carries the post-translational modification N-acetylthreonine. Threonine 2 carries the post-translational modification Phosphothreonine. The helical transmembrane segment at 41–61 threads the bilayer; the sequence is CAYFALGGWFTGTTFVTSWYT. A chlorophyll a-binding site is contributed by histidine 118. A helical membrane pass occupies residues 125 to 141; the sequence is GFMLRQFELARSVQLRP. Glutamine 130 and asparagine 143 together coordinate pheophytin a. The chain crosses the membrane as a helical span at residues 153-166; that stretch reads VFVSVFLIYPLGQS. Histidine 198 lines the chlorophyll a pocket. A helical transmembrane segment spans residues 208–228; that stretch reads AALLCAIHGATVENTLFEDGD. The a plastoquinone site is built by histidine 215 and phenylalanine 262. Histidine 215 contributes to the Fe cation binding site. Histidine 269 lines the Fe cation pocket. A helical membrane pass occupies residues 279 to 295; the sequence is GLWMSALGVVGLALNLR.

The protein belongs to the reaction center PufL/M/PsbA/D family. As to quaternary structure, PSII is composed of 1 copy each of membrane proteins PsbA, PsbB, PsbC, PsbD, PsbE, PsbF, PsbH, PsbI, PsbJ, PsbK, PsbL, PsbM, PsbT, PsbX, PsbY, PsbZ, Psb30/Ycf12, at least 3 peripheral proteins of the oxygen-evolving complex and a large number of cofactors. It forms dimeric complexes. The cofactor is The D1/D2 heterodimer binds P680, chlorophylls that are the primary electron donor of PSII, and subsequent electron acceptors. It shares a non-heme iron and each subunit binds pheophytin, quinone, additional chlorophylls, carotenoids and lipids. There is also a Cl(-1) ion associated with D1 and D2, which is required for oxygen evolution. The PSII complex binds additional chlorophylls, carotenoids and specific lipids..

Its subcellular location is the plastid. The protein localises to the chloroplast thylakoid membrane. The enzyme catalyses 2 a plastoquinone + 4 hnu + 2 H2O = 2 a plastoquinol + O2. In terms of biological role, photosystem II (PSII) is a light-driven water:plastoquinone oxidoreductase that uses light energy to abstract electrons from H(2)O, generating O(2) and a proton gradient subsequently used for ATP formation. It consists of a core antenna complex that captures photons, and an electron transfer chain that converts photonic excitation into a charge separation. The D1/D2 (PsbA/PsbD) reaction center heterodimer binds P680, the primary electron donor of PSII as well as several subsequent electron acceptors. D2 is needed for assembly of a stable PSII complex. This Lemna minor (Common duckweed) protein is Photosystem II D2 protein.